A 196-amino-acid polypeptide reads, in one-letter code: Dephospho-CoA kinase (196 aa).

A DPCK domain is found at 3–196 (RIGLTGNIGC…KVYEELTRDP (194 aa)). Residue 11 to 16 (GCGKST) coordinates ATP.

This sequence belongs to the CoaE family.

Its subcellular location is the cytoplasm. It carries out the reaction 3'-dephospho-CoA + ATP = ADP + CoA + H(+). Its pathway is cofactor biosynthesis; coenzyme A biosynthesis; CoA from (R)-pantothenate: step 5/5. In terms of biological role, catalyzes the phosphorylation of the 3'-hydroxyl group of dephosphocoenzyme A to form coenzyme A. The chain is Dephospho-CoA kinase from Aquifex aeolicus (strain VF5).